Here is a 61-residue protein sequence, read N- to C-terminus: MAKKSMIAKNNRPAKFAVQEYTRCQRCGRPHSVYRKFKLCRICLRELAHAGQIPGMRKASW.

Cysteine 24, cysteine 27, cysteine 40, and cysteine 43 together coordinate Zn(2+).

It belongs to the universal ribosomal protein uS14 family. Zinc-binding uS14 subfamily. In terms of assembly, part of the 30S ribosomal subunit. Contacts proteins S3 and S10. The cofactor is Zn(2+).

In terms of biological role, binds 16S rRNA, required for the assembly of 30S particles and may also be responsible for determining the conformation of the 16S rRNA at the A site. In Lacticaseibacillus paracasei (strain ATCC 334 / BCRC 17002 / CCUG 31169 / CIP 107868 / KCTC 3260 / NRRL B-441) (Lactobacillus paracasei), this protein is Small ribosomal subunit protein uS14B.